The following is a 344-amino-acid chain: Phosphate acyltransferase (344 aa).

This sequence belongs to the PlsX family. Homodimer. Probably interacts with PlsY.

Its subcellular location is the cytoplasm. The catalysed reaction is a fatty acyl-[ACP] + phosphate = an acyl phosphate + holo-[ACP]. It functions in the pathway lipid metabolism; phospholipid metabolism. In terms of biological role, catalyzes the reversible formation of acyl-phosphate (acyl-PO(4)) from acyl-[acyl-carrier-protein] (acyl-ACP). This enzyme utilizes acyl-ACP as fatty acyl donor, but not acyl-CoA. The sequence is that of Phosphate acyltransferase from Enterobacter sp. (strain 638).